A 62-amino-acid chain; its full sequence is uncharacterized protein (62 aa).

Positions 1-62 (MTSTQNLKDK…PPKKSLSQLP (62 aa)) are disordered. Residues 7 to 29 (LKDKFEEEIRQQKEGKGKKEKVW) show a composition bias toward basic and acidic residues. Residues 32–43 (HSDSSYNKQTAV) are compositionally biased toward polar residues.

This is an uncharacterized protein from Dictyostelium discoideum (Social amoeba).